Reading from the N-terminus, the 294-residue chain is Beta-lactamase (294 aa).

The signal sequence occupies residues 1–30 (MKHSSLRRSLLLAGITLPLVSFALPAWANA). Serine 75 acts as the Acyl-ester intermediate in catalysis. Position 239 to 241 (239 to 241 (KTG)) interacts with substrate.

The protein belongs to the class-A beta-lactamase family.

It catalyses the reaction a beta-lactam + H2O = a substituted beta-amino acid. This is Beta-lactamase (blaA) from Yersinia enterocolitica.